The chain runs to 137 residues: MRLSRAFAWPLLCSIATTVKAPFATAPSDCGGHYTDEYGRIFNYAGPKTECVWIIELNPGEIVTVAIPDLKGFACGKEYVEVLDGPPGSESLDRICKAFSTFYYSSSNIITIKYSREPSHPPTFFEIYYFVDAWSTH.

Residues 1–21 (MRLSRAFAWPLLCSIATTVKA) form the signal peptide. 2 cysteine pairs are disulfide-bonded: Cys-30/Cys-51 and Cys-75/Cys-96. A CUB domain is found at 30 to 132 (CGGHYTDEYG…TFFEIYYFVD (103 aa)).

The chain is CUB domain-containing protein from Homo sapiens (Human).